Reading from the N-terminus, the 639-residue chain is Transcription factor phomR (639 aa).

The zn(2)-C6 fungal-type DNA-binding region spans 14 to 41; the sequence is CWTCRLRRKKCNEGGPPCDNCEARGIHC. Disordered stretches follow at residues 58–136 and 476–499; these read REEA…AGTG and LPRSPEKTSSASGKPSHGRKTGPE. A compositionally biased stretch (low complexity) spans 68–108; sequence SGRGRSYSRSSSTAAAAAPKPAEGAMVTGGSSSSSRGSGSS.

It is found in the nucleus. In terms of biological role, transcription factor; part of the gene cluster that mediates the biosynthesis of the phomopsins, a group of hexapeptide mycotoxins which infects lupins and causes lupinosis disease in livestock. May play a role in the regulation of the production of phomopsins. In Diaporthe leptostromiformis (Lupinosis disease fungus), this protein is Transcription factor phomR.